We begin with the raw amino-acid sequence, 365 residues long: Large ribosomal subunit protein uL3 (365 aa).

Residues 343 to 365 are disordered; sequence RPPKKKPPVQRPQITYVSVESKQ. Residues 354-365 show a composition bias toward polar residues; it reads PQITYVSVESKQ.

The protein belongs to the universal ribosomal protein uL3 family. As to quaternary structure, part of the 50S ribosomal subunit. Forms a cluster with proteins L14 and L24e.

One of the primary rRNA binding proteins, it binds directly near the 3'-end of the 23S rRNA, where it nucleates assembly of the 50S subunit. The polypeptide is Large ribosomal subunit protein uL3 (Pyrococcus furiosus (strain ATCC 43587 / DSM 3638 / JCM 8422 / Vc1)).